The chain runs to 145 residues: D-aminoacyl-tRNA deacylase (145 aa).

A Gly-cisPro motif, important for rejection of L-amino acids motif is present at residues 137–138 (GP).

Belongs to the DTD family. Homodimer.

Its subcellular location is the cytoplasm. It catalyses the reaction glycyl-tRNA(Ala) + H2O = tRNA(Ala) + glycine + H(+). The catalysed reaction is a D-aminoacyl-tRNA + H2O = a tRNA + a D-alpha-amino acid + H(+). Its function is as follows. An aminoacyl-tRNA editing enzyme that deacylates mischarged D-aminoacyl-tRNAs. Also deacylates mischarged glycyl-tRNA(Ala), protecting cells against glycine mischarging by AlaRS. Acts via tRNA-based rather than protein-based catalysis; rejects L-amino acids rather than detecting D-amino acids in the active site. By recycling D-aminoacyl-tRNA to D-amino acids and free tRNA molecules, this enzyme counteracts the toxicity associated with the formation of D-aminoacyl-tRNA entities in vivo and helps enforce protein L-homochirality. The chain is D-aminoacyl-tRNA deacylase from Pelobacter propionicus (strain DSM 2379 / NBRC 103807 / OttBd1).